A 217-amino-acid polypeptide reads, in one-letter code: Adenylate kinase (217 aa).

Residue 10-15 participates in ATP binding; it reads GAGKGT. An NMP region spans residues 30–59; the sequence is STGDMFRAAMKNETELGLKAKSFIDAGDLV. AMP contacts are provided by residues threonine 31, arginine 36, 57 to 59, 85 to 88, and glutamine 92; these read DLV and GFPR. Positions 126–163 are LID; the sequence is GRRVSPTTGKTYHIVYNPPKVEGKCDIDGSDLIQRDDD. Residues arginine 127 and 136–137 contribute to the ATP site; that span reads TY. The AMP site is built by arginine 160 and arginine 171. Glutamine 199 serves as a coordination point for ATP.

The protein belongs to the adenylate kinase family. As to quaternary structure, monomer.

It localises to the cytoplasm. It carries out the reaction AMP + ATP = 2 ADP. Its pathway is purine metabolism; AMP biosynthesis via salvage pathway; AMP from ADP: step 1/1. In terms of biological role, catalyzes the reversible transfer of the terminal phosphate group between ATP and AMP. Plays an important role in cellular energy homeostasis and in adenine nucleotide metabolism. This is Adenylate kinase from Shouchella clausii (strain KSM-K16) (Alkalihalobacillus clausii).